Here is an 87-residue protein sequence, read N- to C-terminus: Dynein light chain 1, cytoplasmic (87 aa).

It belongs to the dynein light chain family. Homodimer. Cytoplasmic dynein consists of two catalytic heavy chains (HCs) and a number of non-catalytic subunits which present intermediate chains (ICs), light intermediate chains (LICs) and light chains (LCs). Component of the nuclear pore complex (NPC). NPC constitutes the exclusive means of nucleocytoplasmic transport. NPCs allow the passive diffusion of ions and small molecules and the active, nuclear transport receptor-mediated bidirectional transport of macromolecules such as proteins, RNAs, ribonucleoparticles (RNPs), and ribosomal subunits across the nuclear envelope. Due to its 8-fold rotational symmetry, all subunits are present with 8 copies or multiples thereof.

The protein localises to the cytoplasm. It is found in the cytoskeleton. Its subcellular location is the nucleus. The protein resides in the nuclear pore complex. Functionally, acts as one of several non-catalytic accessory components of the cytoplasmic dynein complex that are thought to be involved in linking dynein to cargos and to adapter proteins that regulate dynein function. Cytoplasmic dynein 1 acts as a motor for the intracellular retrograde motility of vesicles and organelles along microtubules. May play a role in changing or maintaining the spatial distribution of cytoskeletal structures. Also a component of the nuclear pore complex. This chain is Dynein light chain 1, cytoplasmic (DYN2), found in Kluyveromyces lactis (strain ATCC 8585 / CBS 2359 / DSM 70799 / NBRC 1267 / NRRL Y-1140 / WM37) (Yeast).